Consider the following 290-residue polypeptide: 4-hydroxybenzoate octaprenyltransferase (290 aa).

Transmembrane regions (helical) follow at residues 33 to 53 (LAAL…AVFV), 91 to 111 (LGVR…FVLV), 116 to 136 (WEAV…PFTK), 138 to 158 (FFAM…VIAF), 165 to 185 (VPAT…AYDT), 212 to 232 (VAAI…VLAP), 237 to 257 (WPLW…FTLI), and 269 to 289 (FSKS…GYLL).

It belongs to the UbiA prenyltransferase family. Mg(2+) is required as a cofactor.

The protein localises to the cell inner membrane. It catalyses the reaction all-trans-octaprenyl diphosphate + 4-hydroxybenzoate = 4-hydroxy-3-(all-trans-octaprenyl)benzoate + diphosphate. The protein operates within cofactor biosynthesis; ubiquinone biosynthesis. Its function is as follows. Catalyzes the prenylation of para-hydroxybenzoate (PHB) with an all-trans polyprenyl group. Mediates the second step in the final reaction sequence of ubiquinone-8 (UQ-8) biosynthesis, which is the condensation of the polyisoprenoid side chain with PHB, generating the first membrane-bound Q intermediate 3-octaprenyl-4-hydroxybenzoate. This is 4-hydroxybenzoate octaprenyltransferase from Acidovorax ebreus (strain TPSY) (Diaphorobacter sp. (strain TPSY)).